Consider the following 465-residue polypeptide: Neuraminidase (465 aa).

Topologically, residues 1–11 (MLPSTIQTLTL) are intravirion. The helical transmembrane segment at 12–34 (FLTSGGVLLSLYVSASLSYLLYS) threads the bilayer. The tract at residues 13–35 (LTSGGVLLSLYVSASLSYLLYSD) is involved in apical transport and lipid raft association. Residues 35-465 (DILLRFSSKI…DTVTGVDMAL (431 aa)) lie on the Virion surface side of the membrane. Positions 38–85 (LRFSSKITAPTMTLDCANASNVQAVNRSATKEMTFLLPEPEWTYPRLS) are hypervariable stalk region. Residues Asn55 and Asn63 are each glycosylated (N-linked (GlcNAc...) asparagine; by host). 8 disulfide bridges follow: Cys86/Cys419, Cys121/Cys126, Cys181/Cys228, Cys230/Cys235, Cys276/Cys290, Cys278/Cys288, Cys317/Cys336, and Cys423/Cys446. The tract at residues 88-465 (GSTFQKALLI…DTVTGVDMAL (378 aa)) is head of neuraminidase. Residue Arg115 coordinates substrate. N-linked (GlcNAc...) asparagine; by host glycosylation is present at Asn143. Asp148 acts as the Proton donor/acceptor in catalysis. Arg149 lines the substrate pocket. 274–275 (EE) serves as a coordination point for substrate. Asn283 carries an N-linked (GlcNAc...) asparagine; by host glycan. A substrate-binding site is contributed by Arg291. Ca(2+) contacts are provided by Asp292 and Asp323. The segment at 328–347 (DDGSITGPCESDGDKGRGGI) is disordered. Arg373 lines the substrate pocket. Residue Tyr408 is the Nucleophile of the active site.

The protein belongs to the glycosyl hydrolase 34 family. As to quaternary structure, homotetramer. The cofactor is Ca(2+). In terms of processing, N-glycosylated.

Its subcellular location is the virion membrane. It is found in the host apical cell membrane. It carries out the reaction Hydrolysis of alpha-(2-&gt;3)-, alpha-(2-&gt;6)-, alpha-(2-&gt;8)- glycosidic linkages of terminal sialic acid residues in oligosaccharides, glycoproteins, glycolipids, colominic acid and synthetic substrates.. With respect to regulation, inhibited by the neuraminidase inhibitors zanamivir (Relenza) and oseltamivir (Tamiflu). These drugs interfere with the release of progeny virus from infected cells and are effective against all influenza strains. Resistance to neuraminidase inhibitors is quite rare. In terms of biological role, catalyzes the removal of terminal sialic acid residues from viral and cellular glycoconjugates. Cleaves off the terminal sialic acids on the glycosylated HA during virus budding to facilitate virus release. Additionally helps virus spread through the circulation by further removing sialic acids from the cell surface. These cleavages prevent self-aggregation and ensure the efficient spread of the progeny virus from cell to cell. Otherwise, infection would be limited to one round of replication. Described as a receptor-destroying enzyme because it cleaves a terminal sialic acid from the cellular receptors. May facilitate viral invasion of the upper airways by cleaving the sialic acid moieties on the mucin of the airway epithelial cells. Likely to plays a role in the budding process through its association with lipid rafts during intracellular transport. May additionally display a raft-association independent effect on budding. Plays a role in the determination of host range restriction on replication and virulence. Sialidase activity in late endosome/lysosome traffic seems to enhance virus replication. This chain is Neuraminidase, found in Influenza B virus (strain B/Memphis/3/1989).